Consider the following 268-residue polypeptide: Phosphatidylglycerol--prolipoprotein diacylglyceryl transferase (268 aa).

The next 3 membrane-spanning stretches (helical) occupy residues 16-36 (FITL…GIWL), 56-76 (IWLV…FNWG), and 92-112 (GIAI…FTYV). Residue R136 coordinates a 1,2-diacyl-sn-glycero-3-phospho-(1'-sn-glycerol). A run of 3 helical transmembrane segments spans residues 175-195 (PTFL…LWLF), 204-224 (GTLL…IEGL), and 236-256 (IAQV…FRLY).

This sequence belongs to the Lgt family.

It is found in the cell inner membrane. It carries out the reaction L-cysteinyl-[prolipoprotein] + a 1,2-diacyl-sn-glycero-3-phospho-(1'-sn-glycerol) = an S-1,2-diacyl-sn-glyceryl-L-cysteinyl-[prolipoprotein] + sn-glycerol 1-phosphate + H(+). It functions in the pathway protein modification; lipoprotein biosynthesis (diacylglyceryl transfer). Functionally, catalyzes the transfer of the diacylglyceryl group from phosphatidylglycerol to the sulfhydryl group of the N-terminal cysteine of a prolipoprotein, the first step in the formation of mature lipoproteins. The polypeptide is Phosphatidylglycerol--prolipoprotein diacylglyceryl transferase (Thermosynechococcus vestitus (strain NIES-2133 / IAM M-273 / BP-1)).